The primary structure comprises 568 residues: MTSFREFAETCQAIEKISSTIETTNKVADLLKKVDVEELPVATHFIMSEVFPAWSGEQLGIGTSLLYVSLSKASGMSIHSIESLVRTTGDIGDTALLILKEKRKNQVTFSSFFEEKPELSITEVYRRFKIASEASGKGSQDIKVKNLQFLFTSSSPREAKYISRLALEELRIGVGEGVVRDAIAKAFSVPAEIVEHSFMVTNDLGIVAAAAKKGGVEALERLGIEINRPIKMMLSQISPDIDADIRAMKEVAIEWKFDGARVQIHKDGNSVTLFSRKLENVTSSLPDLVEIVRKHVKAESAILDGEAVAVDENGVPRAFQEILKRFRRKYDVREKALGIPIQLNFFDIMYINGKTLIDLPLLERRKALESCVESSVEDSKSISVAEQVITGDLELVEKIYREALKAGHEGVMVKNPNSVYSPGKRGKNWLKKKPLMDTLDLVIVGAEWGFGRRANLIGSYTVACYDPDTTRFLQVGKVGTGLTDDQLKELTEILSGLMEGGEAGGVFAIRPKVVLEIAFEEIQKSPNYDSGFALRFPRFIRIRDDKDPEEADTIQRIGRVYSQQLKRL.

Glu-254 provides a ligand contact to ATP. Catalysis depends on Lys-256, which acts as the N6-AMP-lysine intermediate. ATP-binding residues include Arg-261, Arg-276, Glu-306, Phe-346, Arg-425, and Lys-431.

This sequence belongs to the ATP-dependent DNA ligase family. The cofactor is Mg(2+).

The enzyme catalyses ATP + (deoxyribonucleotide)n-3'-hydroxyl + 5'-phospho-(deoxyribonucleotide)m = (deoxyribonucleotide)n+m + AMP + diphosphate.. In terms of biological role, DNA ligase that seals nicks in double-stranded DNA during DNA replication, DNA recombination and DNA repair. The protein is DNA ligase 2 of Methanosarcina mazei (strain ATCC BAA-159 / DSM 3647 / Goe1 / Go1 / JCM 11833 / OCM 88) (Methanosarcina frisia).